A 218-amino-acid polypeptide reads, in one-letter code: Histidine biosynthesis bifunctional protein HisIE (218 aa).

Positions 1–131 are phosphoribosyl-AMP cyclohydrolase; it reads MAPHQFKSKG…GDYDLPPADT (131 aa). Residues 132-218 are phosphoribosyl-ATP pyrophosphohydrolase; the sequence is LSQVFRVVEE…VYRALQQRRR (87 aa).

The protein in the N-terminal section; belongs to the PRA-CH family. In the C-terminal section; belongs to the PRA-PH family.

It is found in the cytoplasm. It carries out the reaction 1-(5-phospho-beta-D-ribosyl)-ATP + H2O = 1-(5-phospho-beta-D-ribosyl)-5'-AMP + diphosphate + H(+). The enzyme catalyses 1-(5-phospho-beta-D-ribosyl)-5'-AMP + H2O = 1-(5-phospho-beta-D-ribosyl)-5-[(5-phospho-beta-D-ribosylamino)methylideneamino]imidazole-4-carboxamide. Its pathway is amino-acid biosynthesis; L-histidine biosynthesis; L-histidine from 5-phospho-alpha-D-ribose 1-diphosphate: step 2/9. It functions in the pathway amino-acid biosynthesis; L-histidine biosynthesis; L-histidine from 5-phospho-alpha-D-ribose 1-diphosphate: step 3/9. The polypeptide is Histidine biosynthesis bifunctional protein HisIE (Gloeobacter violaceus (strain ATCC 29082 / PCC 7421)).